The following is a 350-amino-acid chain: Lipoyl synthase (350 aa).

The segment at 1-39 (MSDTSSPKPVASGEKFRTAQGITAIKDGQKRRASAEPQV) is disordered. Positions 73, 78, 84, 99, 103, 106, and 314 each coordinate [4Fe-4S] cluster. Residues 85–303 (WSNGTATIML…RDIGLEKGFM (219 aa)) enclose the Radical SAM core domain.

The protein belongs to the radical SAM superfamily. Lipoyl synthase family. [4Fe-4S] cluster serves as cofactor.

Its subcellular location is the cytoplasm. The enzyme catalyses [[Fe-S] cluster scaffold protein carrying a second [4Fe-4S](2+) cluster] + N(6)-octanoyl-L-lysyl-[protein] + 2 oxidized [2Fe-2S]-[ferredoxin] + 2 S-adenosyl-L-methionine + 4 H(+) = [[Fe-S] cluster scaffold protein] + N(6)-[(R)-dihydrolipoyl]-L-lysyl-[protein] + 4 Fe(3+) + 2 hydrogen sulfide + 2 5'-deoxyadenosine + 2 L-methionine + 2 reduced [2Fe-2S]-[ferredoxin]. The protein operates within protein modification; protein lipoylation via endogenous pathway; protein N(6)-(lipoyl)lysine from octanoyl-[acyl-carrier-protein]: step 2/2. Its function is as follows. Catalyzes the radical-mediated insertion of two sulfur atoms into the C-6 and C-8 positions of the octanoyl moiety bound to the lipoyl domains of lipoate-dependent enzymes, thereby converting the octanoylated domains into lipoylated derivatives. In Ectopseudomonas mendocina (strain ymp) (Pseudomonas mendocina), this protein is Lipoyl synthase.